The chain runs to 184 residues: Luciferin-binding protein (184 aa).

4 EF-hand domains span residues 10–45 (YHLRKMKTRMKRVDVTGDGFISREDYELIAVRIAKI), 46–81 (AKLSAEKAEETRQEFLRVADQLGLAPGVRISVEEAA), 98–133 (MAVIQSLIMYDCIDTDKDGYVSLPEFKAFLQAVGPD), and 134–169 (ITDDKAITCFNTLDFNKNGQISRDEFLVTVNDFLFG). Ca(2+) contacts are provided by Asp111, Asp113, Asp115, Tyr117, Glu122, Asp147, Asn149, Asn151, Gln153, and Glu158.

Its function is as follows. This Ca(2+)-dependent protein binds to luciferin. The luciferin of LBP is capable of reacting with luciferase and O(2) only when calcium is bound. In Renilla reniformis (Sea pansy), this protein is Luciferin-binding protein.